A 484-amino-acid chain; its full sequence is ATP synthase subunit beta (484 aa).

An ATP-binding site is contributed by 168 to 175 (GGAGVGKT).

This sequence belongs to the ATPase alpha/beta chains family. F-type ATPases have 2 components, CF(1) - the catalytic core - and CF(0) - the membrane proton channel. CF(1) has five subunits: alpha(3), beta(3), gamma(1), delta(1), epsilon(1). CF(0) has three main subunits: a(1), b(2) and c(9-12). The alpha and beta chains form an alternating ring which encloses part of the gamma chain. CF(1) is attached to CF(0) by a central stalk formed by the gamma and epsilon chains, while a peripheral stalk is formed by the delta and b chains.

It localises to the cell membrane. The enzyme catalyses ATP + H2O + 4 H(+)(in) = ADP + phosphate + 5 H(+)(out). Functionally, produces ATP from ADP in the presence of a proton gradient across the membrane. The catalytic sites are hosted primarily by the beta subunits. This chain is ATP synthase subunit beta, found in Renibacterium salmoninarum (strain ATCC 33209 / DSM 20767 / JCM 11484 / NBRC 15589 / NCIMB 2235).